Consider the following 312-residue polypeptide: NAD(P)(+)--arginine ADP-ribosyltransferase 1 (312 aa).

The signal sequence occupies residues 1–20; that stretch reads MELLALRWVLLAGTLLSTSA. A propeptide spanning residues 21–31 is cleaved from the precursor; it reads ASSALQEGDLG. Intrachain disulfides connect Cys51-Cys260 and Cys159-Cys208. The TR mART core domain occupies 71–256; sequence IAYAVTWRQA…IQLHSKGKMS (186 aa). Positions 108, 164, and 183 each coordinate NAD(+). The active site involves Arg164. The active site involves Ser186. Ser217 provides a ligand contact to NAD(+). Residue Glu224 is part of the active site. A propeptide spanning residues 267-312 is cleaved from the precursor; sequence GGQWGRGHQEVGLGLSPGLSLPVLPCRRRVWEGLGHREGDPIPAAV.

The protein belongs to the Arg-specific ADP-ribosyltransferase family.

It localises to the secreted. It is found in the extracellular space. The catalysed reaction is L-arginyl-[protein] + NAD(+) = N(omega)-(ADP-D-ribosyl)-L-arginyl-[protein] + nicotinamide + H(+). This is NAD(P)(+)--arginine ADP-ribosyltransferase 1 from Gallus gallus (Chicken).